Consider the following 224-residue polypeptide: Response regulator protein GraR (224 aa).

In terms of domain architecture, Response regulatory spans 2–115 (QILLVEDDNT…VLIAKLQAIY (114 aa)). Residue D51 is modified to 4-aspartylphosphate. The ompR/PhoB-type DNA-binding region spans 126-224 (KRTLTWQDAV…KVGKGYMAHE (99 aa)). Phosphothreonine is present on residues T128, T130, and T149.

In terms of assembly, interacts with GraX. In terms of processing, phosphorylated by GraS. Phosphorylated by Stk1; phosphorylation increases the DNA-binding activity of GraR.

It is found in the cytoplasm. In terms of biological role, member of the two-component regulatory system GraR/GraS involved in resistance against cationic antimicrobial peptides (CAMPs). Upon phosphorylation by GraS, functions as a transcription regulator by direct binding to promoter regions of target genes such as adhesins, exoproteins, transporters, toxins, and proteins involved in cell wall synthesis. Down-regulates the expression of many genes involved in RNA and amino acid synthesis or glycolysis. This chain is Response regulator protein GraR (graR), found in Staphylococcus aureus (strain Mu3 / ATCC 700698).